Reading from the N-terminus, the 68-residue chain is Conotoxin Pu5.5 (68 aa).

The first 22 residues, 1–22 (MRCVPVFIILLVLIASAPSVDA), serve as a signal peptide directing secretion. Positions 23-49 (RPQTKDDALASFRDSIKRHLQTLLDAR) are excised as a propeptide.

The protein belongs to the conotoxin T superfamily. Post-translationally, contains 2 disulfide bonds that can be either 'C1-C3, C2-C4' or 'C1-C4, C2-C3', since these disulfide connectivities have been observed for conotoxins with cysteine framework V (for examples, see AC P0DQQ7 and AC P81755). Expressed by the venom duct.

The protein resides in the secreted. The sequence is that of Conotoxin Pu5.5 from Conus pulicarius (Flea-bitten cone).